Consider the following 475-residue polypeptide: Sulfate adenylyltransferase subunit 1 (475 aa).

Positions 25 to 239 (KSLLRFLTCG…EVLETVEIQR (215 aa)) constitute a tr-type G domain. A G1 region spans residues 34–41 (GSVDDGKS). A GTP-binding site is contributed by 34-41 (GSVDDGKS). The interval 92-96 (GITID) is G2. The segment at 113–116 (DTPG) is G3. GTP-binding positions include 113-117 (DTPGH) and 168-171 (NKMD). The G4 stretch occupies residues 168–171 (NKMD). A G5 region spans residues 206–208 (SAL).

The protein belongs to the TRAFAC class translation factor GTPase superfamily. Classic translation factor GTPase family. CysN/NodQ subfamily. In terms of assembly, heterodimer composed of CysD, the smaller subunit, and CysN.

The enzyme catalyses sulfate + ATP + H(+) = adenosine 5'-phosphosulfate + diphosphate. It participates in sulfur metabolism; hydrogen sulfide biosynthesis; sulfite from sulfate: step 1/3. Functionally, with CysD forms the ATP sulfurylase (ATPS) that catalyzes the adenylation of sulfate producing adenosine 5'-phosphosulfate (APS) and diphosphate, the first enzymatic step in sulfur assimilation pathway. APS synthesis involves the formation of a high-energy phosphoric-sulfuric acid anhydride bond driven by GTP hydrolysis by CysN coupled to ATP hydrolysis by CysD. The polypeptide is Sulfate adenylyltransferase subunit 1 (Citrobacter koseri (strain ATCC BAA-895 / CDC 4225-83 / SGSC4696)).